Consider the following 303-residue polypeptide: Ribosomal protein L11 methyltransferase (303 aa).

S-adenosyl-L-methionine-binding residues include T146, G167, D189, and N236.

This sequence belongs to the methyltransferase superfamily. PrmA family.

The protein resides in the cytoplasm. The enzyme catalyses L-lysyl-[protein] + 3 S-adenosyl-L-methionine = N(6),N(6),N(6)-trimethyl-L-lysyl-[protein] + 3 S-adenosyl-L-homocysteine + 3 H(+). Methylates ribosomal protein L11. This is Ribosomal protein L11 methyltransferase from Acinetobacter baylyi (strain ATCC 33305 / BD413 / ADP1).